Reading from the N-terminus, the 546-residue chain is MTKFIFVTGGVVSSIGKGIVAASLGRLLKSRGYSVSILKLDPYINVDPGTMSPYQHGEVFVTADGAETDLDLGHYERFTDTPMSRLNSVTTGSIYQAVINKERRGDYNGGTVQVIPHITAEIRDRIHRVAQDTHPDVVITEIGGTVGDIESLPFLEAIRQFRKDVGRRDLAYIHVTLVPWIPSAGEMKTKPTQHSVKELRSIGIQPDILVCRCDRPLQAGMKEKMSEFCNVSPEAVITSQDASSIYEVPLMLEREGLAEQVLDILQLEQRQPDLTQWQRWVHQLQNPSRRVEVAIVGKYVRLNDAYLSVSESLRHAAASADADLQLRWVDAEDLENGDPATYLDGVDGIVVPGGFGARGVDGKVAAIQFARDHQIPFLGLCLGMQAAVIDWARNVAGLDGANSAEFDPETPHPVIALLPEQQDVVDLGGTMRLGLCPCKIQSGSLAQRLYGEDIIYERHRHRYEFNNAYRSLFLESGYCVSGTSPDSRLVEIVERPDHPFFIACQFHPEFVSRPNHPHPLFQGLIKAALGSDLTLVDPAPLPAETV.

The interval 1-267 (MTKFIFVTGG…AEQVLDILQL (267 aa)) is amidoligase domain. Ser-13 contributes to the CTP binding site. Ser-13 is a UTP binding site. 14-19 (SIGKGI) lines the ATP pocket. Tyr-54 is a binding site for L-glutamine. An ATP-binding site is contributed by Asp-71. Mg(2+)-binding residues include Asp-71 and Glu-141. CTP is bound by residues 148 to 150 (DIE), 188 to 193 (KTKPTQ), and Lys-224. UTP contacts are provided by residues 188–193 (KTKPTQ) and Lys-224. One can recognise a Glutamine amidotransferase type-1 domain in the interval 292 to 534 (EVAIVGKYVR…IKAALGSDLT (243 aa)). Gly-354 provides a ligand contact to L-glutamine. The active-site Nucleophile; for glutamine hydrolysis is the Cys-381. L-glutamine contacts are provided by residues 382–385 (LGMQ), Glu-405, and Arg-462. Catalysis depends on residues His-507 and Glu-509.

The protein belongs to the CTP synthase family. In terms of assembly, homotetramer.

The catalysed reaction is UTP + L-glutamine + ATP + H2O = CTP + L-glutamate + ADP + phosphate + 2 H(+). The enzyme catalyses L-glutamine + H2O = L-glutamate + NH4(+). It carries out the reaction UTP + NH4(+) + ATP = CTP + ADP + phosphate + 2 H(+). It participates in pyrimidine metabolism; CTP biosynthesis via de novo pathway; CTP from UDP: step 2/2. Its activity is regulated as follows. Allosterically activated by GTP, when glutamine is the substrate; GTP has no effect on the reaction when ammonia is the substrate. The allosteric effector GTP functions by stabilizing the protein conformation that binds the tetrahedral intermediate(s) formed during glutamine hydrolysis. Inhibited by the product CTP, via allosteric rather than competitive inhibition. Functionally, catalyzes the ATP-dependent amination of UTP to CTP with either L-glutamine or ammonia as the source of nitrogen. Regulates intracellular CTP levels through interactions with the four ribonucleotide triphosphates. In Synechococcus sp. (strain ATCC 27144 / PCC 6301 / SAUG 1402/1) (Anacystis nidulans), this protein is CTP synthase.